The chain runs to 374 residues: Putative 2,3-diketo-5-methylthiopentyl-1-phosphate enolase (374 aa).

Substrate contacts are provided by residues lysine 138, 164 to 167 (QDDE), histidine 255, glycine 327, and 349 to 350 (GG). Aspartate 166 contacts Mg(2+).

The protein belongs to the RuBisCO large chain family. Type IV subfamily. Homodimer. Mg(2+) serves as cofactor.

The catalysed reaction is 5-methylsulfanyl-2,3-dioxopentyl phosphate = 2-hydroxy-5-methylsulfanyl-3-oxopent-1-enyl phosphate. It participates in amino-acid biosynthesis; L-methionine biosynthesis via salvage pathway; L-methionine from S-methyl-5-thio-alpha-D-ribose 1-phosphate: step 3/6. Its function is as follows. Catalyzes the enolization of 2,3-diketo-5-methylthiopentyl-1-phosphate (DK-MTP-1-P) into 2-hydroxy-3-keto-5-methylthiopentenyl-1-phosphate (HK-MTPenyl-1-P). In Shouchella clausii (strain KSM-K16) (Alkalihalobacillus clausii), this protein is Putative 2,3-diketo-5-methylthiopentyl-1-phosphate enolase (mtnW).